The sequence spans 303 residues: tRNA pseudouridine synthase B (303 aa).

Asp-53 (nucleophile) is an active-site residue.

This sequence belongs to the pseudouridine synthase TruB family. Type 1 subfamily.

The catalysed reaction is uridine(55) in tRNA = pseudouridine(55) in tRNA. Functionally, responsible for synthesis of pseudouridine from uracil-55 in the psi GC loop of transfer RNAs. The sequence is that of tRNA pseudouridine synthase B from Zymomonas mobilis subsp. mobilis (strain ATCC 31821 / ZM4 / CP4).